The following is a 318-amino-acid chain: Probable arabinan endo-1,5-alpha-L-arabinosidase C (318 aa).

An N-terminal signal peptide occupies residues 1 to 28; sequence MLSFVLLLCVALVNAYSDPGACSGTCWA. Asp-30 functions as the Proton acceptor in the catalytic mechanism. N-linked (GlcNAc...) asparagine glycans are attached at residues Asn-72, Asn-80, and Asn-188. Glu-196 functions as the Proton donor in the catalytic mechanism. Asn-277 is a glycosylation site (N-linked (GlcNAc...) asparagine).

This sequence belongs to the glycosyl hydrolase 43 family.

Its subcellular location is the secreted. The catalysed reaction is Endohydrolysis of (1-&gt;5)-alpha-arabinofuranosidic linkages in (1-&gt;5)-arabinans.. It participates in glycan metabolism; L-arabinan degradation. Its function is as follows. Endo-1,5-alpha-L-arabinanase involved in degradation of pectin. Its preferred substrate is linear 1,5-alpha-L-arabinan. In Aspergillus niger (strain ATCC MYA-4892 / CBS 513.88 / FGSC A1513), this protein is Probable arabinan endo-1,5-alpha-L-arabinosidase C (abnC).